A 342-amino-acid chain; its full sequence is Holliday junction branch migration complex subunit RuvB (342 aa).

The interval 1–179 (MTNILSPEKS…FGIPMRLNFY (179 aa)) is large ATPase domain (RuvB-L). ATP is bound by residues Ile18, Arg19, Gly60, Lys63, Thr64, Thr65, 126 to 128 (EDF), Arg169, Tyr179, and Arg216. A Mg(2+)-binding site is contributed by Thr64. The tract at residues 180–250 (NTEELKQVLN…ICDFGLKRLT (71 aa)) is small ATPAse domain (RuvB-S). The segment at 253–342 (SIGLDSNDYR…HQFNILNENE (90 aa)) is head domain (RuvB-H). Arg289, Arg308, and Arg313 together coordinate DNA.

Belongs to the RuvB family. In terms of assembly, homohexamer. Forms an RuvA(8)-RuvB(12)-Holliday junction (HJ) complex. HJ DNA is sandwiched between 2 RuvA tetramers; dsDNA enters through RuvA and exits via RuvB. An RuvB hexamer assembles on each DNA strand where it exits the tetramer. Each RuvB hexamer is contacted by two RuvA subunits (via domain III) on 2 adjacent RuvB subunits; this complex drives branch migration. In the full resolvosome a probable DNA-RuvA(4)-RuvB(12)-RuvC(2) complex forms which resolves the HJ.

It localises to the cytoplasm. It carries out the reaction ATP + H2O = ADP + phosphate + H(+). The RuvA-RuvB-RuvC complex processes Holliday junction (HJ) DNA during genetic recombination and DNA repair, while the RuvA-RuvB complex plays an important role in the rescue of blocked DNA replication forks via replication fork reversal (RFR). RuvA specifically binds to HJ cruciform DNA, conferring on it an open structure. The RuvB hexamer acts as an ATP-dependent pump, pulling dsDNA into and through the RuvAB complex. RuvB forms 2 homohexamers on either side of HJ DNA bound by 1 or 2 RuvA tetramers; 4 subunits per hexamer contact DNA at a time. Coordinated motions by a converter formed by DNA-disengaged RuvB subunits stimulates ATP hydrolysis and nucleotide exchange. Immobilization of the converter enables RuvB to convert the ATP-contained energy into a lever motion, pulling 2 nucleotides of DNA out of the RuvA tetramer per ATP hydrolyzed, thus driving DNA branch migration. The RuvB motors rotate together with the DNA substrate, which together with the progressing nucleotide cycle form the mechanistic basis for DNA recombination by continuous HJ branch migration. Branch migration allows RuvC to scan DNA until it finds its consensus sequence, where it cleaves and resolves cruciform DNA. In Rickettsia typhi (strain ATCC VR-144 / Wilmington), this protein is Holliday junction branch migration complex subunit RuvB.